Here is a 429-residue protein sequence, read N- to C-terminus: L-threonine dehydratase biosynthetic IlvA (429 aa).

Residue lysine 66 is modified to N6-(pyridoxal phosphate)lysine. Pyridoxal 5'-phosphate contacts are provided by residues asparagine 93, 196 to 200, and serine 322; that span reads GGGGC. Positions 346–420 constitute an ACT-like domain; the sequence is HYFLVDFPQE…TDIHVEALEP (75 aa).

Belongs to the serine/threonine dehydratase family. As to quaternary structure, homotetramer. Pyridoxal 5'-phosphate is required as a cofactor.

It carries out the reaction L-threonine = 2-oxobutanoate + NH4(+). It functions in the pathway amino-acid biosynthesis; L-isoleucine biosynthesis; 2-oxobutanoate from L-threonine: step 1/1. Functionally, catalyzes the anaerobic formation of alpha-ketobutyrate and ammonia from threonine in a two-step reaction. The first step involved a dehydration of threonine and a production of enamine intermediates (aminocrotonate), which tautomerizes to its imine form (iminobutyrate). Both intermediates are unstable and short-lived. The second step is the nonenzymatic hydrolysis of the enamine/imine intermediates to form 2-ketobutyrate and free ammonia. In the low water environment of the cell, the second step is accelerated by RidA. This chain is L-threonine dehydratase biosynthetic IlvA (ilvA), found in Mycobacterium bovis (strain ATCC BAA-935 / AF2122/97).